Consider the following 1076-residue polypeptide: MGILSITDQPPLVQAIFSRDVEEVRSLLSQKENINVLDQERRTPLHAAAYVGDVPILQLLLMSGANVNAKDTLWLTPLHRAAASRNEKVLGLLLAHSADVNARDKLWQTPLHVAAANRATKCAEALAPLLSSLNVADRSGRSALHHAVHSGHLETVNLLLNKGASLNVCDKKERQPLHWAAFLGHLEVLKLLVARGADLGCKDRKGYGLLHTAAASGQIEVVKYLLRMGAEIDEPNAFGNTALHIACYLGQDAVAIELVNAGANVNQPNDKGFTPLHVAAVSTNGALCLELLVNNGADVNYQSKEGKSPLHMAAIHGRFTRSQILIQNGSEIDCADKFGNTPLHVAARYGHELLISTLMTNGADTARRGIHDMFPLHLAVLFGFSDCCRKLLSSGQLYSIVSSLSNEHVLSAGFDINTPDNLGRTCLHAAASGGNVECLNLLLSSGADLRRRDKFGRTPLHYAAANGSYQCAVTLVTAGAGVNEADCKGCSPLHYAAASDTYRRAEPHTPSSHDAEEDEPLKESRRKEAFFCLEFLLDNGADPSLRDRQGYTAVHYAAAYGNRQNLELLLEMSFNCLEDVESTIPVSPLHLAAYNGHCEALKTLAETLVNLDVRDHKGRTALFLATERGSTECVEVLTAHGASALIKERKRKWTPLHAAAASGHTDSLHLLIDSGERADITDVMDAYGQTPLMLAIMNGHVDCVHLLLEKGSTADAADLRGRTALHRGAVTGCEDCLAALLDHDAFVLCRDFKGRTPIHLASACGHTAVLRTLLQAALSTDPLDAGVDYSGYSPMHWASYTGHEDCLELLLEHSPFSYLEGNPFTPLHCAVINNQDSTTEMLLGALGAKIVNSRDAKGRTPLHAAAFADNVSGLRMLLQHQAEVNATDHTGRTALMTAAENGQTAAVEFLLYRGKADLTVLDENKNTALHLACSKGHEKCALMILAETQDLGLINATNSALQMPLHIAARNGLASVVQALLSHGATVLAVDEEGHTPALACAPNKDVADCLALILSTMKPFPPKDAVSPFSFSLLKNCSIAAAKTVGGCGALPHGASCPYSQERPGAIGLDGCYSE.

28 ANK repeats span residues 7 to 36 (TDQP…NINV), 40 to 69 (ERRT…NVNA), 73 to 102 (LWLT…DVNA), 106 to 135 (LWQT…SLNV), 139 to 168 (SGRS…SLNV), 172 to 201 (KERQ…DLGC), 205 to 234 (KGYG…EIDE), 238 to 267 (FGNT…NVNQ), 271 to 301 (KGFT…DVNY), 305 to 334 (EGKS…EIDC), 338 to 367 (FGNT…DTAR), 371 to 400 (HDMF…LYSI), 422 to 451 (LGRT…DLRR), 455 to 484 (FGRT…GVNE), 488 to 545 (KGCS…DPSL), 549 to 579 (QGYT…CLED), 584 to 613 (IPVS…NLDV), 617 to 646 (KGRT…SALI), 651 to 680 (RKWT…RADI), 687 to 716 (YGQT…TADA), 720 to 749 (RGRT…FVLC), 753 to 782 (KGRT…STDP), 790 to 819 (SGYS…FSYL), 822 to 852 (NPFT…KIVN), 857 to 886 (KGRT…EVNA), 890 to 920 (TGRT…DLTV), 924 to 953 (NKNT…DLGL), and 960 to 989 (ALQM…TVLA). Over residues 502 to 514 (YRRAEPHTPSSHD) the composition is skewed to basic and acidic residues. The disordered stretch occupies residues 502–522 (YRRAEPHTPSSHDAEEDEPLK). Ser-1028 and Ser-1075 each carry phosphoserine.

Protein phosphatase 6 (PP6) holoenzyme is proposed to be a heterotrimeric complex formed by the catalytic subunit, a SAPS domain-containing subunit (PP6R) and an ankyrin repeat-domain containing regulatory subunit (ARS). Interacts with PPP6R1.

Putative regulatory subunit of protein phosphatase 6 (PP6) that may be involved in the recognition of phosphoprotein substrates. This is Serine/threonine-protein phosphatase 6 regulatory ankyrin repeat subunit C (ANKRD52) from Homo sapiens (Human).